The following is a 179-amino-acid chain: MPRRRVIGQRKILPDPKFGSELLAKFVNILMVDGKKSTAESIVYSALETLAQRSGKSELEAFEVALENVRPTVEVKSRRVGGSTYQVPVEVRPVRRNALAMRWIVEAARKRGDKSMALRLANELSDAAENKGTAVKKREDVHRMAEANKAFAHYRWLSLRSFSHQAGASSKQPALGYLN.

It belongs to the universal ribosomal protein uS7 family. As to quaternary structure, part of the 30S ribosomal subunit. Contacts proteins S9 and S11. Cross-links to IF3 and the P and E site tRNAs.

In terms of biological role, one of the primary rRNA binding proteins, it binds directly to 16S rRNA where it nucleates assembly of the head domain of the 30S subunit. Is located at the subunit interface close to the decoding center, where it has been shown to contact mRNA. Has been shown to contact tRNA in both the P and E sites; it probably blocks exit of the E site tRNA. Functionally, protein S7 is also a translational repressor protein; it regulates the expression of the str operon members to different degrees by binding to its mRNA. The chain is Small ribosomal subunit protein uS7 (rpsG) from Escherichia coli (strain K12).